A 434-amino-acid polypeptide reads, in one-letter code: Histidinol dehydrogenase (434 aa).

Tyrosine 130, glutamine 188, and asparagine 211 together coordinate NAD(+). Residues serine 237, glutamine 259, and histidine 262 each contribute to the substrate site. The Zn(2+) site is built by glutamine 259 and histidine 262. Catalysis depends on proton acceptor residues glutamate 326 and histidine 327. Residues histidine 327, aspartate 360, glutamate 414, and histidine 419 each contribute to the substrate site. A Zn(2+)-binding site is contributed by aspartate 360. Residue histidine 419 coordinates Zn(2+).

It belongs to the histidinol dehydrogenase family. In terms of assembly, homodimer. The cofactor is Zn(2+).

The enzyme catalyses L-histidinol + 2 NAD(+) + H2O = L-histidine + 2 NADH + 3 H(+). Its pathway is amino-acid biosynthesis; L-histidine biosynthesis; L-histidine from 5-phospho-alpha-D-ribose 1-diphosphate: step 9/9. Its function is as follows. Catalyzes the sequential NAD-dependent oxidations of L-histidinol to L-histidinaldehyde and then to L-histidine. This chain is Histidinol dehydrogenase, found in Shigella flexneri.